We begin with the raw amino-acid sequence, 134 residues long: Outer membrane lipoprotein RcsF (134 aa).

The first 15 residues, methionine 1–glycine 15, serve as a signal peptide directing secretion. Residue cysteine 16 is the site of N-palmitoyl cysteine attachment. Cysteine 16 carries S-diacylglycerol cysteine lipidation. Disordered regions lie at residues serine 22–proline 48 and glycine 67–alanine 88. The span at aspartate 72–proline 82 shows a compositional bias: polar residues. Cystine bridges form between cysteine 74–cysteine 118 and cysteine 109–cysteine 124.

The protein belongs to the RcsF family.

It localises to the cell outer membrane. Essential component of the Rcs signaling system, which controls transcription of numerous genes. Plays a role in signal transduction from the cell surface to the histidine kinase RcsC. May detect outer membrane defects. The chain is Outer membrane lipoprotein RcsF from Escherichia coli O6:H1 (strain CFT073 / ATCC 700928 / UPEC).